A 417-amino-acid chain; its full sequence is Squalene synthase (417 aa).

2 residues coordinate NADP(+): arginine 52 and arginine 77. Positions 80, 83, and 84 each coordinate Mg(2+). Arginine 218 contacts NADP(+). Residues 284-304 (SVFNFCAIPQVMAIATLAACY) form a helical membrane-spanning segment. Residues lysine 315 and arginine 317 each coordinate NADP(+). The helical transmembrane segment at 384-404 (PIYLSFVMLLAALSWQYLTTL) threads the bilayer.

This sequence belongs to the phytoene/squalene synthase family. Mg(2+) serves as cofactor. As to expression, widely expressed.

The protein localises to the endoplasmic reticulum membrane. The catalysed reaction is 2 (2E,6E)-farnesyl diphosphate + NADPH + H(+) = squalene + 2 diphosphate + NADP(+). It catalyses the reaction 2 (2E,6E)-farnesyl diphosphate + NADH + H(+) = squalene + 2 diphosphate + NAD(+). The enzyme catalyses 2 (2E,6E)-farnesyl diphosphate = presqualene diphosphate + diphosphate. It carries out the reaction presqualene diphosphate + NADH + H(+) = squalene + diphosphate + NAD(+). The catalysed reaction is presqualene diphosphate + NADPH + H(+) = squalene + diphosphate + NADP(+). The protein operates within terpene metabolism; lanosterol biosynthesis; lanosterol from farnesyl diphosphate: step 1/3. In terms of biological role, catalyzes the condensation of 2 farnesyl pyrophosphate (FPP) moieties to form squalene. Proceeds in two distinct steps. In the first half-reaction, two molecules of FPP react to form the stable presqualene diphosphate intermediate (PSQPP), with concomitant release of a proton and a molecule of inorganic diphosphate. In the second half-reaction, PSQPP undergoes heterolysis, isomerization, and reduction with NADPH or NADH to form squalene. It is the first committed enzyme of the sterol biosynthesis pathway. This Homo sapiens (Human) protein is Squalene synthase (FDFT1).